Here is a 673-residue protein sequence, read N- to C-terminus: MQSKFWFEFLQTLPTLPGDTVPVMAIQASPGETSGELIIAQAPNQTLDNNNSALGGLSPLLFFPVVIIAVIFLILVTIFLYTRFYVIAPNNEALVRTGGVFKKEQMVILHGGCIVIPGFHEITRVSLREISIDVVRAGNLAVRTQDYMRANMRVTFYVCITPNRNEILTAAARLSKKGQISEADIKDALEKRADDAIRAAAKKKKLAELDSDKLGFADEVLNLIQGDLRKVGLTLNNIAISEIEESDTYDENNFFDAQGVRLRTETIQRSIQQKREVELTTRVAIEQGELEAEKKSLAIKREQEDANITQQKEIELLKLAQRKELESQEAQQQREIQEAKDKEEAKKERNKILQEQAVEEERIQKELAIQNSQIASAIALEERNKELKVAQALQKQEAEVAEIQRKKTIEASQLQAKAEIALAEQKTQITEQTAAIAIANKQKERLEAEALRAEAESGVITAQEVEAAERAQKLAVIVAQQDAQQHRIAEQNVVEIDVFRRRRQAESARQAAELEAESIRTLADANRHKAMAEAEGQKAIIEAHNSLSNANRTAELLKTIWPELVTQLPDLIKALAPQPGVLGESRIYSFPGLSGSNGNGSNSGDINKLLLSTSGLTLLNGLLNEGKLSTVVDQVKSLLQDPPSVSPPSAAVSEDDWPDLAPPTETNFSPEEI.

The chain crosses the membrane as a helical span at residues 60 to 80; it reads LLFFPVVIIAVIFLILVTIFL. Residues 639 to 673 are disordered; it reads LQDPPSVSPPSAAVSEDDWPDLAPPTETNFSPEEI. Residues 664–673 are compositionally biased toward polar residues; that stretch reads TETNFSPEEI.

Belongs to the band 7/mec-2 family. Flotillin subfamily. As to quaternary structure, homooligomerizes.

It is found in the cell inner membrane. It localises to the membrane raft. Found in functional membrane microdomains (FMM) that may be equivalent to eukaryotic membrane rafts. FMMs are highly dynamic and increase in number as cells age. Flotillins are thought to be important factors in membrane fluidity. The chain is Flotillin family inner membrane protein sll1021 from Synechocystis sp. (strain ATCC 27184 / PCC 6803 / Kazusa).